A 114-amino-acid polypeptide reads, in one-letter code: Aspartate 1-decarboxylase (114 aa).

S25 acts as the Schiff-base intermediate with substrate; via pyruvic acid in catalysis. Residue S25 is modified to Pyruvic acid (Ser). T57 lines the substrate pocket. The Proton donor role is filled by Y58. 71-73 lines the substrate pocket; that stretch reads GAA.

Belongs to the PanD family. As to quaternary structure, heterooctamer of four alpha and four beta subunits. Pyruvate serves as cofactor. In terms of processing, is synthesized initially as an inactive proenzyme, which is activated by self-cleavage at a specific serine bond to produce a beta-subunit with a hydroxyl group at its C-terminus and an alpha-subunit with a pyruvoyl group at its N-terminus.

The protein localises to the cytoplasm. It carries out the reaction L-aspartate + H(+) = beta-alanine + CO2. Its pathway is cofactor biosynthesis; (R)-pantothenate biosynthesis; beta-alanine from L-aspartate: step 1/1. Catalyzes the pyruvoyl-dependent decarboxylation of aspartate to produce beta-alanine. The polypeptide is Aspartate 1-decarboxylase (Haloquadratum walsbyi (strain DSM 16790 / HBSQ001)).